A 244-amino-acid chain; its full sequence is Type III pantothenate kinase (244 aa).

8-15 (DQGNSACK) serves as a coordination point for ATP. Substrate-binding positions include Tyr-88 and 94-97 (GADR). The active-site Proton acceptor is the Asp-96. Asp-117 is a K(+) binding site. Thr-120 contributes to the ATP binding site. Thr-175 contributes to the substrate binding site.

This sequence belongs to the type III pantothenate kinase family. In terms of assembly, homodimer. It depends on NH4(+) as a cofactor. K(+) serves as cofactor.

The protein resides in the cytoplasm. The catalysed reaction is (R)-pantothenate + ATP = (R)-4'-phosphopantothenate + ADP + H(+). It functions in the pathway cofactor biosynthesis; coenzyme A biosynthesis; CoA from (R)-pantothenate: step 1/5. In terms of biological role, catalyzes the phosphorylation of pantothenate (Pan), the first step in CoA biosynthesis. This is Type III pantothenate kinase from Porphyromonas gingivalis (strain ATCC BAA-308 / W83).